The sequence spans 441 residues: Zinc finger and BTB domain-containing protein 8A (441 aa).

Residues cysteine 24–glycine 92 form the BTB domain. Composition is skewed to polar residues over residues glutamate 146–glutamine 170 and lysine 178–leucine 197. Residues glutamate 146 to glutamate 252 form a disordered region. Residues serine 161 and serine 167 each carry the phosphoserine modification. Glycyl lysine isopeptide (Lys-Gly) (interchain with G-Cter in SUMO2) cross-links involve residues lysine 178, lysine 182, and lysine 199. Residues threonine 198–lysine 208 show a composition bias toward basic and acidic residues. The segment covering serine 234–glutamine 248 has biased composition (low complexity). 2 C2H2-type zinc fingers span residues phenylalanine 282–histidine 304 and tyrosine 310–histidine 333. Residue lysine 437 forms a Glycyl lysine isopeptide (Lys-Gly) (interchain with G-Cter in SUMO2) linkage.

It is found in the nucleus. Functionally, may be involved in transcriptional regulation. In Bos taurus (Bovine), this protein is Zinc finger and BTB domain-containing protein 8A (ZBTB8A).